A 94-amino-acid polypeptide reads, in one-letter code: Large ribosomal subunit protein bL25 (94 aa).

The protein belongs to the bacterial ribosomal protein bL25 family. In terms of assembly, part of the 50S ribosomal subunit; part of the 5S rRNA/L5/L18/L25 subcomplex. Contacts the 5S rRNA. Binds to the 5S rRNA independently of L5 and L18.

In terms of biological role, this is one of the proteins that binds to the 5S RNA in the ribosome where it forms part of the central protuberance. The polypeptide is Large ribosomal subunit protein bL25 (Citrobacter koseri (strain ATCC BAA-895 / CDC 4225-83 / SGSC4696)).